Here is a 91-residue protein sequence, read N- to C-terminus: MSFDRSKTPTWRPGYRFQYEPAQKGHVLLYPEGMIKLNESAALIGGLIDGERDVAAIIAELDKQFPGVPELGDDIEQFMEVARAQHWITLD.

The protein belongs to the PqqD family. Monomer. Interacts with PqqE.

It functions in the pathway cofactor biosynthesis; pyrroloquinoline quinone biosynthesis. Functions as a PqqA binding protein and presents PqqA to PqqE, in the pyrroloquinoline quinone (PQQ) biosynthetic pathway. In Pseudomonas fluorescens (strain Pf0-1), this protein is PqqA binding protein.